A 306-amino-acid polypeptide reads, in one-letter code: UDP-3-O-acyl-N-acetylglucosamine deacetylase (306 aa).

Zn(2+)-binding residues include His81, His241, and Asp245. The active-site Proton donor is His268.

This sequence belongs to the LpxC family. It depends on Zn(2+) as a cofactor.

The catalysed reaction is a UDP-3-O-[(3R)-3-hydroxyacyl]-N-acetyl-alpha-D-glucosamine + H2O = a UDP-3-O-[(3R)-3-hydroxyacyl]-alpha-D-glucosamine + acetate. It participates in glycolipid biosynthesis; lipid IV(A) biosynthesis; lipid IV(A) from (3R)-3-hydroxytetradecanoyl-[acyl-carrier-protein] and UDP-N-acetyl-alpha-D-glucosamine: step 2/6. Functionally, catalyzes the hydrolysis of UDP-3-O-myristoyl-N-acetylglucosamine to form UDP-3-O-myristoylglucosamine and acetate, the committed step in lipid A biosynthesis. The chain is UDP-3-O-acyl-N-acetylglucosamine deacetylase from Hydrogenovibrio crunogenus (strain DSM 25203 / XCL-2) (Thiomicrospira crunogena).